The sequence spans 535 residues: Alpha-1,3-mannosyl-glycoprotein 4-beta-N-acetylglucosaminyltransferase A (535 aa).

Residues 1–6 lie on the Cytoplasmic side of the membrane; the sequence is MRLRNG. A helical; Signal-anchor for type II membrane protein transmembrane segment spans residues 7–27; that stretch reads TVATVLVFITTFLSLSWYTAW. Residues 28-54 adopt a coiled-coil conformation; it reads QNGKEKLIAYQREFHALKERLRIAEHR. Residues 28 to 535 lie on the Lumenal side of the membrane; that stretch reads QNGKEKLIAY…NEIHIKKMTN (508 aa). N-linked (GlcNAc...) asparagine glycosylation is found at Asn77, Asn85, and Asn458.

The protein belongs to the glycosyltransferase 54 family. A divalent metal cation is required as a cofactor. In terms of processing, N-glycosylated.

It localises to the golgi apparatus membrane. The protein resides in the secreted. The enzyme catalyses N(4)-{beta-D-GlcNAc-(1-&gt;2)-alpha-D-Man-(1-&gt;3)-[beta-D-GlcNAc-(1-&gt;2)-alpha-D-Man-(1-&gt;6)]-beta-D-Man-(1-&gt;4)-beta-D-GlcNAc-(1-&gt;4)-beta-D-GlcNAc}-L-asparaginyl-[protein] + UDP-N-acetyl-alpha-D-glucosamine = N(4)-{beta-D-GlcNAc-(1-&gt;2)-[beta-D-GlcNAc-(1-&gt;4)]-alpha-D-Man-(1-&gt;3)-[beta-D-GlcNAc-(1-&gt;2)-alpha-D-Man-(1-&gt;6)]-beta-D-Man-(1-&gt;4)-beta-D-GlcNAc-(1-&gt;4)-beta-D-GlcNAc}-L-asparaginyl-[protein] + UDP + H(+). It carries out the reaction an N(4)-{beta-D-GlcNAc-(1-&gt;2)-alpha-D-Man-(1-&gt;3)-[alpha-D-Man-(1-&gt;6)]-beta-D-Man-(1-&gt;4)-beta-D-GlcNAc-(1-&gt;4)-beta-D-GlcNAc}-L-asparaginyl-[protein] + UDP-N-acetyl-alpha-D-glucosamine = an N(4)-{beta-D-GlcNAc-(1-&gt;2)-[beta-D-GlcNAc-(1-&gt;4)]-alpha-D-Man-(1-&gt;3)-[alpha-D-Man-(1-&gt;6)]-beta-D-Man-(1-&gt;4)-beta-D-GlcNAc-(1-&gt;4)-beta-D-GlcNAc}-L-asparaginyl-[protein] + UDP + H(+). The catalysed reaction is an N(4)-{beta-D-GlcNAc-(1-&gt;2)-alpha-D-Man-(1-&gt;3)-[beta-D-GlcNAc-(1-&gt;2)-[beta-D-GlcNAc-(1-&gt;6)]-alpha-D-Man-(1-&gt;6)]-beta-D-Man-(1-&gt;4)-beta-D-GlcNAc-(1-&gt;4)-beta-D-GlcNAc}-L-asparaginyl-[protein] + UDP-N-acetyl-alpha-D-glucosamine = an N(4)-{beta-D-GlcNAc-(1-&gt;2)-[beta-D-GlcNAc-(1-&gt;4)]-alpha-D-Man-(1-&gt;3)-[beta-D-GlcNAc-(1-&gt;2)-[beta-D-GlcNAc-(1-&gt;6)]-alpha-D-Man-(1-&gt;6)]-beta-D-Man-(1-&gt;4)-beta-D-GlcNAc-(1-&gt;4)-beta-D-GlcNAc}-L-asparaginyl-[protein] + UDP + H(+). It catalyses the reaction an N(4)-{beta-D-GlcNAc-(1-&gt;2)-alpha-D-Man-(1-&gt;3)-[beta-D-GlcNAc-(1-&gt;2)-alpha-D-Man-(1-&gt;6)]-beta-D-Man-(1-&gt;4)-beta-D-GlcNAc-(1-&gt;4)-[alpha-L-Fuc-(1-&gt;6)]-beta-D-GlcNAc}-L-asparaginyl-[protein] + UDP-N-acetyl-alpha-D-glucosamine = N(4)-{beta-D-GlcNAc-(1-&gt;2)-[beta-D-GlcNAc-(1-&gt;4)]-alpha-D-Man-(1-&gt;3)-[beta-D-GlcNAc-(1-&gt;2)-alpha-D-Man-(1-&gt;6)]-beta-D-Man-(1-&gt;4)-beta-D-GlcNAc-(1-&gt;4)-[alpha-L-Fuc-(1-&gt;6)]-beta-D-GlcNAc}-asparaginyl-[protein] + UDP + H(+). The enzyme catalyses an N(4)-{beta-D-GlcNAc-(1-&gt;2)-alpha-D-Man-(1-&gt;3)-[beta-D-Gal-(1-&gt;4)-beta-D-GlcNAc-(1-&gt;2)-alpha-D-Man-(1-&gt;6)]-beta-D-Man-(1-&gt;4)-beta-D-GlcNAc-(1-&gt;4)-beta-D-GlcNAc}-L-asparaginyl-[protein] + UDP-N-acetyl-alpha-D-glucosamine = an N(4)-{beta-D-GlcNAc-(1-&gt;2)-[beta-D-GlcNAc-(1-&gt;4)]-alpha-D-Man-(1-&gt;3)-[beta-D-Gal-(1-&gt;4)-beta-D-GlcNAc-(1-&gt;2)-alpha-D-Man-(1-&gt;6)]-beta-D-Man-(1-&gt;4)-beta-D-GlcNAc-(1-&gt;4)-beta-D-GlcNAc}-L-asparaginyl-[protein] + UDP + H(+). It carries out the reaction N(4)-{beta-D-GlcNAc-(1-&gt;2)-alpha-D-Man-(1-&gt;3)-[alpha-D-Man-(1-&gt;3)-{alpha-D-Man-(1-&gt;6)}-alpha-D-Man-(1-&gt;6)]-beta-D-Man-(1-&gt;4)-beta-D-GlcNAc-(1-&gt;4)-beta-D-GlcNAc}-asparaginyl-[protein] + UDP-N-acetyl-alpha-D-glucosamine = N(4)-{beta-D-GlcNAc-(1-&gt;2)-[beta-D-GlcNAc-(1-&gt;4)]-alpha-D-Man-(1-&gt;3)-[alpha-D-Man-(1-&gt;3)-{alpha-D-Man-(1-&gt;6)}-alpha-D-Man-(1-&gt;6)]-beta-D-Man-(1-&gt;4)-beta-D-GlcNAc-(1-&gt;4)-beta-D-GlcNAc}-asparaginyl-[protein] + UDP + H(+). The catalysed reaction is N(4)-{beta-D-GlcNAc-(1-&gt;2)-alpha-D-Man-(1-&gt;3)-beta-D-Man-(1-&gt;4)-beta-D-GlcNAc-(1-&gt;4)-beta-D-GlcNAc}-asparaginyl-[protein] + UDP-N-acetyl-alpha-D-glucosamine = N(4)-{beta-D-GlcNAc-(1-&gt;2)-[beta-D-GlcNAc-(1-&gt;4)]-alpha-D-Man-(1-&gt;3)-beta-D-Man-(1-&gt;4)-beta-D-GlcNAc-(1-&gt;4)-beta-D-GlcNAc}-asparaginyl-[protein] + UDP + H(+). It functions in the pathway protein modification; protein glycosylation. Inhibited by UDP. Functionally, glycosyltransferase that catalyze the transfer of GlcNAc from UDP-GlcNAc to the GlcNAcbeta1-2Manalpha1-3 arm of the core structure of N-linked glycans through a beta1-4 linkage and participates in the production of tri- and tetra-antennary N-linked sugar chains. Involved in glucose transport by mediating SLC2A2/GLUT2 glycosylation, thereby controlling cell-surface expression of SLC2A2 in pancreatic beta cells. The polypeptide is Alpha-1,3-mannosyl-glycoprotein 4-beta-N-acetylglucosaminyltransferase A (Gallus gallus (Chicken)).